A 172-amino-acid polypeptide reads, in one-letter code: Ribosome maturation factor RimM (172 aa).

Positions 96–168 (EGEFYYHEII…RVDVEIPEGL (73 aa)) constitute a PRC barrel domain.

The protein belongs to the RimM family. In terms of assembly, binds ribosomal protein uS19.

It localises to the cytoplasm. Functionally, an accessory protein needed during the final step in the assembly of 30S ribosomal subunit, possibly for assembly of the head region. Essential for efficient processing of 16S rRNA. May be needed both before and after RbfA during the maturation of 16S rRNA. It has affinity for free ribosomal 30S subunits but not for 70S ribosomes. The chain is Ribosome maturation factor RimM from Streptococcus gordonii (strain Challis / ATCC 35105 / BCRC 15272 / CH1 / DL1 / V288).